A 373-amino-acid polypeptide reads, in one-letter code: Forkhead box protein E1 (373 aa).

Residues 19–51 form a disordered region; the sequence is KEERGETAAGAGVPGEATGRGAGGRRRKRPLQR. The span at 41–50 shows a compositional bias: basic residues; the sequence is GGRRRKRPLQ. The segment at residues 53–147 is a DNA-binding region (fork-head); it reads KPPYSYIALI…ESGSFLRRRK (95 aa).

In terms of processing, phosphorylated. Detected in adult brain, placenta, lung, liver, skeletal muscle, kidney, pancreas, heart, colon, small intestine testis and thymus. Expression was strongest in heart and pancreas.

The protein localises to the nucleus. Its function is as follows. Transcription factor that binds consensus sites on a variety of gene promoters and activate their transcription. Involved in proper palate formation, most probably through the expression of MSX1 and TGFB3 genes which are direct targets of this transcription factor. Also implicated in thyroid gland morphogenesis. May indirectly play a role in cell growth and migration through the regulation of WNT5A expression. This Homo sapiens (Human) protein is Forkhead box protein E1 (FOXE1).